We begin with the raw amino-acid sequence, 70 residues long: Probable protein transport protein Sec61 subunit gamma (70 aa).

The Cytoplasmic portion of the chain corresponds to 1–33 (MADNADDLFQIPKNFYKEGSHFIKRCVKPDRKE). Residues 34–62 (FLSISKAVATGFVLMGLIGYIIKLIHIPI) traverse the membrane as a helical segment. Residues 63-70 (NKVLVGGA) lie on the Extracellular side of the membrane.

The protein belongs to the SecE/SEC61-gamma family. As to quaternary structure, heterotrimeric complex composed of SEC61-alpha, SEC61-beta and SEC61-gamma.

The protein localises to the endoplasmic reticulum membrane. Functionally, necessary for protein translocation in the endoplasmic reticulum. This is Probable protein transport protein Sec61 subunit gamma (sss1) from Schizosaccharomyces pombe (strain 972 / ATCC 24843) (Fission yeast).